The chain runs to 489 residues: Potassium voltage-gated channel subfamily A member 7 (489 aa).

The chain crosses the membrane as a helical span at residues valine 176–threonine 196. N-linked (GlcNAc...) asparagine glycosylation is present at asparagine 224. Residues phenylalanine 242 to valine 262 form a helical membrane-spanning segment. The S-palmitoyl cysteine moiety is linked to residue cysteine 264. Residues valine 274–leucine 294 traverse the membrane as a helical segment. Residues isoleucine 309 to serine 328 form a helical; Voltage-sensor membrane-spanning segment. Residues leucine 345–phenylalanine 365 form a helical membrane-spanning segment. The Selectivity filter motif lies at threonine 391–aspartate 396. Residues isoleucine 406–isoleucine 426 traverse the membrane as a helical segment.

It belongs to the potassium channel family. A (Shaker) (TC 1.A.1.2) subfamily. Kv1.7/KCNA7 sub-subfamily. Heterotetramer of potassium channel proteins. As to expression, detected in heart, skeletal muscle, brain, and pancreatic islet cells.

Its subcellular location is the membrane. It catalyses the reaction K(+)(in) = K(+)(out). Functionally, mediates the voltage-dependent potassium ion permeability of excitable membranes. Assuming opened or closed conformations in response to the voltage difference across the membrane, the protein forms a potassium-selective channel through which potassium ions may pass in accordance with their electrochemical gradient. Channels formed by isoform 1 inactivate faster than channels formed by isoform 2. The protein is Potassium voltage-gated channel subfamily A member 7 (Kcna7) of Mus musculus (Mouse).